The following is a 180-amino-acid chain: Large ribosomal subunit protein uL5 (180 aa).

This sequence belongs to the universal ribosomal protein uL5 family. As to quaternary structure, part of the 50S ribosomal subunit; part of the 5S rRNA/L5/L18/L25 subcomplex. Contacts the 5S rRNA and the P site tRNA. Forms a bridge to the 30S subunit in the 70S ribosome.

Functionally, this is one of the proteins that bind and probably mediate the attachment of the 5S RNA into the large ribosomal subunit, where it forms part of the central protuberance. In the 70S ribosome it contacts protein S13 of the 30S subunit (bridge B1b), connecting the 2 subunits; this bridge is implicated in subunit movement. Contacts the P site tRNA; the 5S rRNA and some of its associated proteins might help stabilize positioning of ribosome-bound tRNAs. The polypeptide is Large ribosomal subunit protein uL5 (Streptococcus uberis (strain ATCC BAA-854 / 0140J)).